The primary structure comprises 47 residues: Defensin-like protein 1 (47 aa).

Intrachain disulfides connect Cys-3/Cys-47, Cys-14/Cys-34, Cys-20/Cys-41, and Cys-24/Cys-43.

In terms of assembly, monomer and homodimer.

Inhibits trypsin but not chymotrypsin. This chain is Defensin-like protein 1, found in Vigna unguiculata (Cowpea).